Here is a 477-residue protein sequence, read N- to C-terminus: ATP synthase subunit beta, chloroplastic (477 aa).

156-163 (GGAGVGKT) serves as a coordination point for ATP.

The protein belongs to the ATPase alpha/beta chains family. In terms of assembly, F-type ATPases have 2 components, CF(1) - the catalytic core - and CF(0) - the membrane proton channel. CF(1) has five subunits: alpha(3), beta(3), gamma(1), delta(1), epsilon(1). CF(0) has four main subunits: a(1), b(1), b'(1) and c(9-12).

It localises to the plastid. Its subcellular location is the chloroplast thylakoid membrane. The enzyme catalyses ATP + H2O + 4 H(+)(in) = ADP + phosphate + 5 H(+)(out). Its function is as follows. Produces ATP from ADP in the presence of a proton gradient across the membrane. The catalytic sites are hosted primarily by the beta subunits. The chain is ATP synthase subunit beta, chloroplastic from Bigelowiella natans (Pedinomonas minutissima).